The primary structure comprises 518 residues: Probable Xaa-Pro aminopeptidase HCDG_07916 (518 aa).

4 residues coordinate Mn(2+): D289, D300, E437, and E475.

This sequence belongs to the peptidase M24B family. The cofactor is Mn(2+).

The enzyme catalyses Release of any N-terminal amino acid, including proline, that is linked to proline, even from a dipeptide or tripeptide.. In terms of biological role, catalyzes the removal of a penultimate prolyl residue from the N-termini of peptides. The chain is Probable Xaa-Pro aminopeptidase HCDG_07916 from Ajellomyces capsulatus (strain H143) (Darling's disease fungus).